The chain runs to 130 residues: Small ribosomal subunit protein uS9 (130 aa).

This sequence belongs to the universal ribosomal protein uS9 family.

This chain is Small ribosomal subunit protein uS9, found in Aster yellows witches'-broom phytoplasma (strain AYWB).